A 187-amino-acid chain; its full sequence is Protein P18, mitochondrial (187 aa).

The N-terminal 17 residues, 1–17 (MRRLSSQLMCTAAAVRF), are a transit peptide targeting the mitochondrion. Residues 160 to 187 (NAAKAKADGKEHPSTLAQQQSLFDIKIQ) form a disordered region.

It localises to the mitochondrion inner membrane. Its function is as follows. Putative RNA-binding protein. The chain is Protein P18, mitochondrial from Leishmania tarentolae (Sauroleishmania tarentolae).